The following is a 433-amino-acid chain: Glucose-6-phosphate isomerase (433 aa).

The active-site Proton donor is the Glu-285. Active-site residues include His-306 and Lys-421.

It belongs to the GPI family.

It localises to the cytoplasm. The catalysed reaction is alpha-D-glucose 6-phosphate = beta-D-fructose 6-phosphate. The protein operates within carbohydrate biosynthesis; gluconeogenesis. It participates in carbohydrate degradation; glycolysis; D-glyceraldehyde 3-phosphate and glycerone phosphate from D-glucose: step 2/4. In terms of biological role, catalyzes the reversible isomerization of glucose-6-phosphate to fructose-6-phosphate. This Mycoplasma mobile (strain ATCC 43663 / 163K / NCTC 11711) (Mesomycoplasma mobile) protein is Glucose-6-phosphate isomerase.